The following is a 384-amino-acid chain: Methyl-CpG-binding domain-containing protein 10 (384 aa).

An MBD domain is found at 4-74; sequence TDELVSIELP…SEFEWTTGET (71 aa). Positions 65-384 are disordered; sequence SEFEWTTGET…QQGAAASVSC (320 aa). The segment covering 80–91 has biased composition (polar residues); that stretch reads RISQKVKATTPT. The stretch at 100–224 forms a coiled coil; that stretch reads KRRSSLTKKD…MEVDTSELEK (125 aa). 3 stretches are compositionally biased toward basic and acidic residues: residues 106-227, 234-250, and 257-269; these read TKKD…KKAG, EPSK…KEAQ, and DVEK…KTEN. A compositionally biased stretch (polar residues) spans 270–284; sequence KGSVTTEANGEQNVT. The span at 295-365 shows a compositional bias: basic and acidic residues; the sequence is EADKGKESKE…NDMKAEDTNR (71 aa). Residues 310 to 356 are a coiled coil; it reads TEAEANKENDTQESDEKKTEAAANKENETQESDVKKTEAAVAEEKSN. Position 323 is a phosphoserine (S323). A compositionally biased stretch (low complexity) spans 369–384; that stretch reads ANQVQQQQGAAASVSC.

As to expression, expressed in leaves, buds, flowers, stems and siliques.

It localises to the nucleus. Functionally, probable transcriptional regulator. Required for nucleolar dominance that consist in the silencing of rRNA genes inherited from one progenitor in genetic hybrids. This chain is Methyl-CpG-binding domain-containing protein 10 (MBD10), found in Arabidopsis thaliana (Mouse-ear cress).